The sequence spans 204 residues: N-(5'-phosphoribosyl)anthranilate isomerase (204 aa).

The protein belongs to the TrpF family.

It catalyses the reaction N-(5-phospho-beta-D-ribosyl)anthranilate = 1-(2-carboxyphenylamino)-1-deoxy-D-ribulose 5-phosphate. The protein operates within amino-acid biosynthesis; L-tryptophan biosynthesis; L-tryptophan from chorismate: step 3/5. The chain is N-(5'-phosphoribosyl)anthranilate isomerase from Bacillus mycoides (strain KBAB4) (Bacillus weihenstephanensis).